The following is a 356-amino-acid chain: 3-dehydroquinate synthase (356 aa).

NAD(+)-binding positions include 106–110, 130–131, K143, and K152; these read GVVGD and TT. Zn(2+) contacts are provided by E185, H248, and H265.

Belongs to the sugar phosphate cyclases superfamily. Dehydroquinate synthase family. NAD(+) is required as a cofactor. Co(2+) serves as cofactor. The cofactor is Zn(2+).

The protein localises to the cytoplasm. It catalyses the reaction 7-phospho-2-dehydro-3-deoxy-D-arabino-heptonate = 3-dehydroquinate + phosphate. It participates in metabolic intermediate biosynthesis; chorismate biosynthesis; chorismate from D-erythrose 4-phosphate and phosphoenolpyruvate: step 2/7. Its function is as follows. Catalyzes the conversion of 3-deoxy-D-arabino-heptulosonate 7-phosphate (DAHP) to dehydroquinate (DHQ). The chain is 3-dehydroquinate synthase from Caldanaerobacter subterraneus subsp. tengcongensis (strain DSM 15242 / JCM 11007 / NBRC 100824 / MB4) (Thermoanaerobacter tengcongensis).